A 2264-amino-acid polypeptide reads, in one-letter code: RNA1 polyprotein (2264 aa).

Residues 566–1156 (MCTALAAGIF…MGRTYLAENG (591 aa)) lie on the Cytoplasmic side of the membrane. The region spanning 750-916 (TEGPNELHKR…PGVLFDPDNP (167 aa)) is the SF3 helicase domain. Residue 780 to 787 (GQRHCGKS) participates in ATP binding. A helical transmembrane segment spans residues 1157–1177 (CGILMIAAALILILVSAWGFW). The Lumenal portion of the chain corresponds to 1178–1203 (KLFIGLFSGSMSLGAAIVGMSAVDIK). The Peptidase C3 domain occupies 1227 to 1436 (AYAKSQAGDG…WADIMPPNTL (210 aa)). Residues His1270, Glu1308, and Cys1400 each act as for picornain 3C-like protease activity in the active site. In terms of domain architecture, RdRp catalytic spans 1713–1841 (NEAINCDYSG…SVSPSIASWF (129 aa)).

It belongs to the nepoviruses RNA1 polyprotein family. Specific enzymatic cleavages by picornain 3C-like protease in vivo yield mature proteins. Picornain 3C-like protease is autocatalytically processed. In terms of processing, VPg is uridylylated by the polymerase and is covalently linked to the 5'-end of genomic RNA. This uridylylated form acts as a nucleotide-peptide primer for the polymerase.

Its subcellular location is the host endoplasmic reticulum lumen. The protein localises to the host endoplasmic reticulum membrane. It catalyses the reaction RNA(n) + a ribonucleoside 5'-triphosphate = RNA(n+1) + diphosphate. Its function is as follows. Picornain 3C-like protease is a thiol protease that cleaves the P1 and P2 polyproteins. This chain is RNA1 polyprotein, found in Beet ringspot virus (BRSV).